Reading from the N-terminus, the 399-residue chain is Putative 8-amino-7-oxononanoate synthase (399 aa).

Residue Arg-24 participates in substrate binding. 111 to 112 is a pyridoxal 5'-phosphate binding site; it reads GW. His-141 serves as a coordination point for substrate. Pyridoxal 5'-phosphate-binding positions include Ser-189, 214–217, and 243–246; these read DEAH and TFSK. Lys-246 carries the post-translational modification N6-(pyridoxal phosphate)lysine. Thr-360 serves as a coordination point for substrate.

It belongs to the class-II pyridoxal-phosphate-dependent aminotransferase family. BioF subfamily. Homodimer. It depends on pyridoxal 5'-phosphate as a cofactor.

It catalyses the reaction 6-carboxyhexanoyl-[ACP] + L-alanine + H(+) = (8S)-8-amino-7-oxononanoate + holo-[ACP] + CO2. The protein operates within cofactor biosynthesis; biotin biosynthesis. Its function is as follows. Catalyzes the decarboxylative condensation of pimeloyl-[acyl-carrier protein] and L-alanine to produce 8-amino-7-oxononanoate (AON), [acyl-carrier protein], and carbon dioxide. In Bordetella bronchiseptica (strain ATCC BAA-588 / NCTC 13252 / RB50) (Alcaligenes bronchisepticus), this protein is Putative 8-amino-7-oxononanoate synthase (bioF).